The primary structure comprises 804 residues: Serine/threonine-protein kinase ATG1 (804 aa).

The region spanning 12–308 (FTIGPEIGRG…FQEFFNDPLI (297 aa)) is the Protein kinase domain. ATP is bound by residues 18–26 (IGRGSFANV) and K41. D158 (proton acceptor) is an active-site residue. Disordered stretches follow at residues 339–364 (TSPP…ERAP), 395–415 (INKS…KGAR), and 455–506 (PSPH…MPIS). Residues 404–415 (TVKDGQIKKGAR) show a composition bias toward basic and acidic residues. The span at 462–495 (NEHSAANPSGPTETQTQRRFSPSSRTSSIGSNRR) shows a compositional bias: polar residues.

This sequence belongs to the protein kinase superfamily. Ser/Thr protein kinase family. APG1/unc-51/ULK1 subfamily. As to quaternary structure, homodimer. Forms a ternary complex with ATG13 and ATG17.

The protein resides in the cytoplasm. It localises to the preautophagosomal structure membrane. The enzyme catalyses L-seryl-[protein] + ATP = O-phospho-L-seryl-[protein] + ADP + H(+). It carries out the reaction L-threonyl-[protein] + ATP = O-phospho-L-threonyl-[protein] + ADP + H(+). Its function is as follows. Serine/threonine protein kinase involved in the cytoplasm to vacuole transport (Cvt) and found to be essential in autophagy, where it is required for the formation of autophagosomes. Involved in the clearance of protein aggregates which cannot be efficiently cleared by the proteasome. Required for selective autophagic degradation of the nucleus (nucleophagy) as well as for mitophagy which contributes to regulate mitochondrial quantity and quality by eliminating the mitochondria to a basal level to fulfill cellular energy requirements and preventing excess ROS production. Also involved in endoplasmic reticulum-specific autophagic process, in selective removal of ER-associated degradation (ERAD) substrates. Plays a key role in ATG9 and ATG23 cycling through the pre-autophagosomal structure and is necessary to promote ATG18 binding to ATG9 through phosphorylation of ATG9. Catalyzes phosphorylation of ATG4, decreasing the interaction between ATG4 and ATG8 and impairing deconjugation of PE-conjugated forms of ATG8. In Pichia angusta (Yeast), this protein is Serine/threonine-protein kinase ATG1.